The primary structure comprises 366 residues: ATP-dependent 6-phosphofructokinase 2 (366 aa).

ATP is bound by residues G15, 78-79 (KD), and 119-122 (GDGT). D120 is a Mg(2+) binding site. Substrate contacts are provided by residues 142-144 (TID), R179, 186-188 (MGR), E239, R284, and 290-293 (HIQR). Residue D144 is the Proton acceptor of the active site.

This sequence belongs to the phosphofructokinase type A (PFKA) family. Mixed-substrate PFK group III subfamily. Homodimer or homotetramer. It depends on Mg(2+) as a cofactor.

It is found in the cytoplasm. The catalysed reaction is beta-D-fructose 6-phosphate + ATP = beta-D-fructose 1,6-bisphosphate + ADP + H(+). Its pathway is carbohydrate degradation; glycolysis; D-glyceraldehyde 3-phosphate and glycerone phosphate from D-glucose: step 3/4. With respect to regulation, subject to allosteric activation by ADP and other diphosphonucleosides, and inhibition by phosphoenolpyruvate. Functionally, catalyzes the phosphorylation of D-fructose 6-phosphate to fructose 1,6-bisphosphate by ATP, the first committing step of glycolysis. This is ATP-dependent 6-phosphofructokinase 2 from Clostridium perfringens (strain 13 / Type A).